The following is a 225-amino-acid chain: Ribosomal RNA small subunit methyltransferase G (225 aa).

S-adenosyl-L-methionine is bound by residues glycine 96, phenylalanine 101, 146-147 (AE), and arginine 160.

It belongs to the methyltransferase superfamily. RNA methyltransferase RsmG family.

Its subcellular location is the cytoplasm. Functionally, specifically methylates the N7 position of a guanine in 16S rRNA. The protein is Ribosomal RNA small subunit methyltransferase G of Mycoplasma mobile (strain ATCC 43663 / 163K / NCTC 11711) (Mesomycoplasma mobile).